We begin with the raw amino-acid sequence, 95 residues long: Large ribosomal subunit protein bL27 (95 aa).

A propeptide spanning residues 1 to 8 (MEMNLQFF) is cleaved from the precursor. A disordered region spans residues 1-34 (MEMNLQFFSHHKGGGSTSNGRDSAGRRLGTKRAD).

This sequence belongs to the bacterial ribosomal protein bL27 family. In terms of processing, the N-terminus is cleaved by ribosomal processing cysteine protease Prp.

The sequence is that of Large ribosomal subunit protein bL27 from Pediococcus pentosaceus (strain ATCC 25745 / CCUG 21536 / LMG 10740 / 183-1w).